Consider the following 442-residue polypeptide: UDP-N-acetylmuramate--L-alanine ligase (442 aa).

109–115 provides a ligand contact to ATP; the sequence is GAHGKTS.

The protein belongs to the MurCDEF family.

It is found in the cytoplasm. The enzyme catalyses UDP-N-acetyl-alpha-D-muramate + L-alanine + ATP = UDP-N-acetyl-alpha-D-muramoyl-L-alanine + ADP + phosphate + H(+). It functions in the pathway cell wall biogenesis; peptidoglycan biosynthesis. In terms of biological role, cell wall formation. This Streptococcus pyogenes serotype M3 (strain SSI-1) protein is UDP-N-acetylmuramate--L-alanine ligase.